A 1394-amino-acid chain; its full sequence is Ninein-like protein (1394 aa).

2 consecutive EF-hand domains span residues 8 to 43 (HYVS…LGLE) and 42 to 77 (LEEQ…VLSS). Disordered stretches follow at residues 77-99 (SGSG…SCAV) and 126-166 (KYGS…KEPQ). The residue at position 149 (Ser-149) is a Phosphoserine. Over residues 151–166 (ESLKSDEDAESAKEPQ) the composition is skewed to basic and acidic residues. 2 consecutive EF-hand domains span residues 197-232 (TPEN…IGLH) and 234-269 (LEKQ…HEPP). Residues Asp-247, Asp-249, Asp-251, Arg-253, and Glu-258 each coordinate Ca(2+). Coiled-coil stretches lie at residues 382-423 (RQEL…MDDC), 461-515 (WEQA…DSEK), and 544-584 (EQFT…SRQS). The KEN box signature appears at 494–496 (KEN). Residues 578 to 602 (LPRSRQSPAGTPGTHRRRIPGRGPA) form a disordered region. Positions 632 to 640 (RMQLETKVN) match the D-box motif. A coiled-coil region spans residues 835–863 (EKEKLEQTYREQVEGLVQEADVLRALLKN). Positions 866-893 (TVVSDQQERTPSSMSLGPDSRQQPTARQ) are enriched in polar residues. Residues 866 to 977 (TVVSDQQERT…SARTLTGQGQ (112 aa)) are disordered. Positions 939-951 (RSSENLGVRDNHQ) are enriched in basic and acidic residues. 2 coiled-coil regions span residues 1057-1229 (SESE…ELTE) and 1269-1331 (GARV…LRKQ).

Interacts with gamma-tubulin and TUBGCP4. Interacts with anaphase promoting complex/cyclosome (APC/C). Interacts with CDC20 and FZR1. Interacts with LCA5 and USH2A. Post-translationally, phosphorylated by PLK1 which disrupts its centrosome association and interaction with gamma-tubulin. In terms of processing, ubiquitinated by the APC/C complex leading to its degradation.

The protein localises to the cytoplasm. Its subcellular location is the cytoskeleton. The protein resides in the microtubule organizing center. It localises to the centrosome. Involved in the microtubule organization in interphase cells. Overexpression induces the fragmentation of the Golgi, and causes lysosomes to disperse toward the cell periphery; it also interferes with mitotic spindle assembly. Involved in vesicle transport in photoreceptor cells. This is Ninein-like protein (Ninl) from Mus musculus (Mouse).